The primary structure comprises 278 residues: Rhomboid protease GlpG (278 aa).

The next 6 helical transmembrane spans lie at 95–115 (GPLT…MQIV), 143–163 (AFLH…WYLA), 170–190 (LGTG…GWGQ), 192–212 (LFSG…MGYV), 224–241 (ISLP…LVAG), and 245–267 (ILGL…LMAF). Serine 202 serves as the catalytic Nucleophile. Histidine 255 is a catalytic residue.

Belongs to the peptidase S54 family.

It localises to the cell inner membrane. The enzyme catalyses Cleaves type-1 transmembrane domains using a catalytic dyad composed of serine and histidine that are contributed by different transmembrane domains.. Rhomboid-type serine protease that catalyzes intramembrane proteolysis. This chain is Rhomboid protease GlpG, found in Yersinia enterocolitica serotype O:8 / biotype 1B (strain NCTC 13174 / 8081).